We begin with the raw amino-acid sequence, 198 residues long: MHFEAEESKEVATDVFNSKNLAVQAQKKILGKMASKSIATTLIDDTSSEVLDELYRVTKEYTQNKKEAEKIIKNLIKTVIKLAILYRNNQFNQDELALMEKFKKKVHQLAMTVVSFHQVDFTFDRNVLSKLLNECREMLHQIIQRHLTTKSHGRVNNVFDHFSDCDFLAALYNPFGNYKPHLQKLCDGINKMLDEENI.

The stretch at 49–83 forms a coiled coil; it reads EVLDELYRVTKEYTQNKKEAEKIIKNLIKTVIKLA.

Belongs to the TNFAIP8 family.

Its subcellular location is the cytoplasm. In terms of biological role, acts as a negative mediator of apoptosis. Suppresses the TNF-mediated apoptosis by inhibiting caspase-8 activity but not the processing of procaspase-8, subsequently resulting in inhibition of BID cleavage and caspase-3 activation. This chain is Tumor necrosis factor alpha-induced protein 8 (TNFAIP8), found in Bos taurus (Bovine).